The following is a 309-amino-acid chain: MSQSSSTGNFDVASLVEDVNLRRVAQYALVVFFLGFFLVPLETGIMTAIKTNESVARSLPFAPPVGEGFTLGNIQFALEQLSGSFFNSLIMSIPATIGSVLFGSMAAYGLTMVNWRAQMGMLMLFVVGVFVPYQAVLVPLARFWNNIFPLARMIEPMVASIPFFQGYHAELVPLVITHIAYGIPICTILFRSYYQSLPNSLVEAGKIDGASITKIYRRIILPISKPMFGVVFIYQFTQIYNEFLFAFTLVTGSDAPAAPVTLVLPAIGASTSGINFGIRMSAAFLAAVPTLILYVAFAEQFAKGLRTEA.

Transmembrane regions (helical) follow at residues 29–49, 89–109, 121–141, 170–190, 227–247, and 282–302; these read LVVFFLGFFLVPLETGIMTAI, LIMSIPATIGSVLFGSMAAYG, MLMLFVVGVFVPYQAVLVPLA, ELVPLVITHIAYGIPICTILF, MFGVVFIYQFTQIYNEFLFAF, and AAFLAAVPTLILYVAFAEQFA. The ABC transmembrane type-1 domain maps to 85–297; it reads FFNSLIMSIP…VPTLILYVAF (213 aa).

It belongs to the binding-protein-dependent transport system permease family. The complex is composed of two ATP-binding proteins (XacJ and XacK), two transmembrane proteins (XacH and XacI) and a solute-binding protein (XacG).

The protein resides in the cell membrane. Functionally, part of the ABC transporter complex XacGHIJK involved in the uptake of xylose and arabinose. Responsible for the translocation of the substrate across the membrane. The protein is Xylose/arabinose import permease protein XacI of Haloferax volcanii (strain ATCC 29605 / DSM 3757 / JCM 8879 / NBRC 14742 / NCIMB 2012 / VKM B-1768 / DS2) (Halobacterium volcanii).